The chain runs to 227 residues: Large ribosomal subunit protein uL3 (227 aa).

Residues Gly129–Lys154 form a disordered region.

The protein belongs to the universal ribosomal protein uL3 family. As to quaternary structure, part of the 50S ribosomal subunit. Forms a cluster with proteins L14 and L19.

In terms of biological role, one of the primary rRNA binding proteins, it binds directly near the 3'-end of the 23S rRNA, where it nucleates assembly of the 50S subunit. This Endomicrobium trichonymphae protein is Large ribosomal subunit protein uL3.